Consider the following 403-residue polypeptide: Na(+)-translocating NADH-quinone reductase subunit B (403 aa).

The next 9 helical transmembrane spans lie at 56 to 76 (MMIT…WNTG), 121 to 141 (AYFL…EVLF), 163 to 183 (ILPP…GVVI), 220 to 240 (WTAV…SGGI), 265 to 285 (TSTL…IASW), 287 to 307 (IVSG…LIGS), 312 to 332 (MFAM…GMFF), 348 to 368 (WIFG…NPAF), and 371 to 391 (GMML…HFVV). Threonine 230 is modified (FMN phosphoryl threonine).

The protein belongs to the NqrB/RnfD family. As to quaternary structure, composed of six subunits; NqrA, NqrB, NqrC, NqrD, NqrE and NqrF. FMN serves as cofactor.

It localises to the cell inner membrane. It carries out the reaction a ubiquinone + n Na(+)(in) + NADH + H(+) = a ubiquinol + n Na(+)(out) + NAD(+). NQR complex catalyzes the reduction of ubiquinone-1 to ubiquinol by two successive reactions, coupled with the transport of Na(+) ions from the cytoplasm to the periplasm. NqrA to NqrE are probably involved in the second step, the conversion of ubisemiquinone to ubiquinol. This is Na(+)-translocating NADH-quinone reductase subunit B from Ectopseudomonas mendocina (strain ymp) (Pseudomonas mendocina).